The sequence spans 135 residues: Large ribosomal subunit protein mL41 (135 aa).

The transit peptide at 1–13 directs the protein to the mitochondrion; it reads MGVLSALARGFVR.

It belongs to the mitochondrion-specific ribosomal protein mL41 family. In terms of assembly, component of the mitochondrial ribosome large subunit (39S) which comprises a 16S rRNA and about 50 distinct proteins.

It is found in the mitochondrion. Component of the mitochondrial ribosome large subunit. Also involved in apoptosis and cell cycle. This chain is Large ribosomal subunit protein mL41 (mrpl41), found in Danio rerio (Zebrafish).